The sequence spans 163 residues: Nucleotide-binding protein MUL_0671 (163 aa).

The protein belongs to the YajQ family.

Nucleotide-binding protein. The polypeptide is Nucleotide-binding protein MUL_0671 (Mycobacterium ulcerans (strain Agy99)).